The chain runs to 115 residues: Large ribosomal subunit protein bL19 (115 aa).

It belongs to the bacterial ribosomal protein bL19 family.

Functionally, this protein is located at the 30S-50S ribosomal subunit interface and may play a role in the structure and function of the aminoacyl-tRNA binding site. The protein is Large ribosomal subunit protein bL19 of Yersinia pseudotuberculosis serotype O:1b (strain IP 31758).